Consider the following 439-residue polypeptide: uncharacterized protein (439 aa).

The first 19 residues, 1-19, serve as a signal peptide directing secretion; that stretch reads MKKLLLTASIICLASAGLA.

This is an uncharacterized protein from Rickettsia felis (strain ATCC VR-1525 / URRWXCal2) (Rickettsia azadi).